Consider the following 194-residue polypeptide: dTTP/UTP pyrophosphatase (194 aa).

Catalysis depends on D73, which acts as the Proton acceptor.

The protein belongs to the Maf family. YhdE subfamily. A divalent metal cation is required as a cofactor.

The protein resides in the cytoplasm. The catalysed reaction is dTTP + H2O = dTMP + diphosphate + H(+). It catalyses the reaction UTP + H2O = UMP + diphosphate + H(+). Functionally, nucleoside triphosphate pyrophosphatase that hydrolyzes dTTP and UTP. May have a dual role in cell division arrest and in preventing the incorporation of modified nucleotides into cellular nucleic acids. The polypeptide is dTTP/UTP pyrophosphatase (Clostridium botulinum (strain ATCC 19397 / Type A)).